The primary structure comprises 484 residues: ATP-dependent rRNA helicase RRP3 (484 aa).

Polar residues predominate over residues 1–10 (MAIVGSNSVS). The disordered stretch occupies residues 1–61 (MAIVGSNSVS…SSQKSKNIVE (61 aa)). Positions 18–54 (RNDARDLAEKIKRNALKKQEQDKKQQLEEESKPESSQ) are enriched in basic and acidic residues. The Q motif signature appears at 71–99 (STFSELKLVPELLEAIQQMKFSKPTPIQS). A Helicase ATP-binding domain is found at 102 to 273 (IPHALEGKDI…RASLHNPVRV (172 aa)). Residue 115 to 122 (AQTGSGKT) coordinates ATP. The DEAD box signature appears at 221–224 (DEAD). A Helicase C-terminal domain is found at 300–444 (YLIHLLNEFV…KDPSPPKAML (145 aa)). A disordered region spans residues 460-484 (RQTKEFHEKTRRGRRGKDDKDREEH). Positions 475–484 (GKDDKDREEH) are enriched in basic and acidic residues.

It belongs to the DEAD box helicase family. DDX47/RRP3 subfamily. In terms of assembly, interacts with the SSU processome.

It is found in the nucleus. It carries out the reaction ATP + H2O = ADP + phosphate + H(+). In terms of biological role, ATP-dependent rRNA helicase required for pre-ribosomal RNA processing. Involved in the maturation of the 35S-pre-rRNA and to its cleavage to mature 18S rRNA. The chain is ATP-dependent rRNA helicase RRP3 from Scheffersomyces stipitis (strain ATCC 58785 / CBS 6054 / NBRC 10063 / NRRL Y-11545) (Yeast).